A 1236-amino-acid chain; its full sequence is Complement factor H (1236 aa).

An N-terminal signal peptide occupies residues 1-18; the sequence is MRFPAKIVWLVLWTVCVA. 20 Sushi domains span residues 19–82, 83–143, 144–207, 208–264, 265–322, 325–383, 385–442, 444–505, 507–562, 565–623, 627–685, 688–745, 750–804, 809–866, 868–936, 937–994, 995–1053, 1054–1111, 1114–1172, and 1173–1235; these read EDCK…ICRK, KPCA…ICEV, VKCL…KCVE, IFCK…TCIE, ITCD…RCAW, CSYP…EEPC, RQCI…RCIR, KTCS…VCIK, CDRP…KAAC, RECS…TCKV, KSCA…VCIE, RTCG…QCIA, RKCK…DCNE, QLCP…RCIE, IGCS…QCVG, LPCG…DCIS, TNCV…ACRD, VSCG…QCKD, GKCG…KCLE, and ACVI…YPRC. 40 disulfides stabilise this stretch: cysteine 21/cysteine 66, cysteine 52/cysteine 80, cysteine 85/cysteine 129, cysteine 114/cysteine 141, cysteine 146/cysteine 192, cysteine 178/cysteine 205, cysteine 210/cysteine 251, cysteine 237/cysteine 262, cysteine 267/cysteine 309, cysteine 294/cysteine 320, cysteine 325/cysteine 372, cysteine 355/cysteine 383, cysteine 387/cysteine 429, cysteine 414/cysteine 440, cysteine 446/cysteine 492, cysteine 475/cysteine 503, cysteine 507/cysteine 551, cysteine 534/cysteine 562, cysteine 567/cysteine 609, cysteine 595/cysteine 621, cysteine 629/cysteine 672, cysteine 658/cysteine 683, cysteine 690/cysteine 732, cysteine 718/cysteine 743, cysteine 752/cysteine 791, cysteine 780/cysteine 802, cysteine 811/cysteine 853, cysteine 839/cysteine 864, cysteine 870/cysteine 923, cysteine 909/cysteine 934, cysteine 939/cysteine 981, cysteine 967/cysteine 992, cysteine 997/cysteine 1040, cysteine 1026/cysteine 1051, cysteine 1056/cysteine 1098, cysteine 1084/cysteine 1109, cysteine 1116/cysteine 1159, cysteine 1145/cysteine 1170, cysteine 1174/cysteine 1225, and cysteine 1208/cysteine 1235. Tyrosine 168 and tyrosine 170 each carry sulfotyrosine. A sulfotyrosine mark is found at tyrosine 465 and tyrosine 473. Tyrosine 575, tyrosine 579, and tyrosine 585 each carry sulfotyrosine. Asparagine 775 carries N-linked (GlcNAc...) asparagine glycosylation. Asparagine 1100 carries N-linked (GlcNAc...) asparagine glycosylation.

As to quaternary structure, homodimer. Also forms homooligomers. Interacts with complement protein C3b; this interaction inhibits complement activation. Interacts with complement protein C3d. Interacts with CR3/ITGAM; this interaction mediates adhesion of neutrophils to pathogens leading to pathogen clearance. Sulfated on tyrosine residues. In terms of tissue distribution, CFH is one of the most abundant complement components in blood where the liver is the major source of CFH protein in vivo. in addition, CFH is secreted by additional cell types including monocytes, fibroblasts, or endothelial cells.

Its subcellular location is the secreted. In terms of biological role, glycoprotein that plays an essential role in maintaining a well-balanced immune response by modulating complement activation. Acts as a soluble inhibitor of complement, where its binding to self markers such as glycan structures prevents complement activation and amplification on cell surfaces. Accelerates the decay of the complement alternative pathway (AP) C3 convertase C3bBb, thus preventing local formation of more C3b, the central player of the complement amplification loop. As a cofactor of the serine protease factor I, CFH also regulates proteolytic degradation of already-deposited C3b. In addition, mediates several cellular responses through interaction with specific receptors. For example, interacts with CR3/ITGAM receptor and thereby mediates the adhesion of human neutrophils to different pathogens. In turn, these pathogens are phagocytosed and destroyed. This chain is Complement factor H (CFH), found in Bos taurus (Bovine).